Consider the following 65-residue polypeptide: Large ribosomal subunit protein bL35 (65 aa).

Positions 1–26 are disordered; that stretch reads MPKIKTVRGAAKRFKKTASGGFKRKQ. A compositionally biased stretch (basic residues) spans 10–26; that stretch reads AAKRFKKTASGGFKRKQ.

Belongs to the bacterial ribosomal protein bL35 family.

The protein is Large ribosomal subunit protein bL35 of Actinobacillus pleuropneumoniae serotype 7 (strain AP76).